Here is a 456-residue protein sequence, read N- to C-terminus: Phosphomethylpyrimidine synthase (456 aa).

Substrate is bound by residues Asn-80, Met-109, Tyr-139, His-175, 195–197 (SRG), 236–239 (DSLR), and Glu-275. His-279 serves as a coordination point for Zn(2+). Residue Tyr-302 participates in substrate binding. His-343 serves as a coordination point for Zn(2+). Residues Cys-423, Cys-426, and Cys-431 each contribute to the [4Fe-4S] cluster site.

Belongs to the ThiC family. It depends on [4Fe-4S] cluster as a cofactor.

The catalysed reaction is 5-amino-1-(5-phospho-beta-D-ribosyl)imidazole + S-adenosyl-L-methionine = 4-amino-2-methyl-5-(phosphooxymethyl)pyrimidine + CO + 5'-deoxyadenosine + formate + L-methionine + 3 H(+). It functions in the pathway cofactor biosynthesis; thiamine diphosphate biosynthesis. Its function is as follows. Catalyzes the synthesis of the hydroxymethylpyrimidine phosphate (HMP-P) moiety of thiamine from aminoimidazole ribotide (AIR) in a radical S-adenosyl-L-methionine (SAM)-dependent reaction. The protein is Phosphomethylpyrimidine synthase of Prochlorococcus marinus (strain MIT 9515).